The chain runs to 469 residues: Mitochondrial distribution and morphology protein 10 (469 aa).

This sequence belongs to the MDM10 family. Component of the ER-mitochondria encounter structure (ERMES) or MDM complex, composed of MMM1, MDM10, MDM12 and MDM34. Associates with the mitochondrial outer membrane sorting assembly machinery SAM(core) complex.

The protein localises to the mitochondrion outer membrane. In terms of biological role, component of the ERMES/MDM complex, which serves as a molecular tether to connect the endoplasmic reticulum and mitochondria. Components of this complex are involved in the control of mitochondrial shape and protein biogenesis and may function in phospholipid exchange. MDM10 is involved in the late assembly steps of the general translocase of the mitochondrial outer membrane (TOM complex). Functions in the TOM40-specific route of the assembly of outer membrane beta-barrel proteins, including the association of TOM40 with the receptor TOM22 and small TOM proteins. Can associate with the SAM(core) complex as well as the MDM12-MMM1 complex, both involved in late steps of the major beta-barrel assembly pathway, that is responsible for biogenesis of all outer membrane beta-barrel proteins. May act as a switch that shuttles between both complexes and channels precursor proteins into the TOM40-specific pathway. Plays a role in mitochondrial morphology and in the inheritance of mitochondria. This chain is Mitochondrial distribution and morphology protein 10, found in Scheffersomyces stipitis (strain ATCC 58785 / CBS 6054 / NBRC 10063 / NRRL Y-11545) (Yeast).